Here is a 181-residue protein sequence, read N- to C-terminus: MKGGKRTQKAADKNRINEQITGVDEVRLIGTDGEQAGVVSINEALDAAAEAGVDLVEMSPNAEPPVCRLMDYGKFLFEKSKEQKEQKKKQKQIQVKEVKFRPGTDEGDYQVKLRNLRRFLEGGDKTKVTIRFRGREMAHQELGIELLNRVKNDLEEISIVESFPRRAEGRQMIMVLAPNKK.

It belongs to the IF-3 family. Monomer.

It is found in the cytoplasm. In terms of biological role, IF-3 binds to the 30S ribosomal subunit and shifts the equilibrium between 70S ribosomes and their 50S and 30S subunits in favor of the free subunits, thus enhancing the availability of 30S subunits on which protein synthesis initiation begins. The protein is Translation initiation factor IF-3 of Idiomarina loihiensis (strain ATCC BAA-735 / DSM 15497 / L2-TR).